A 387-amino-acid chain; its full sequence is 3-ketoacyl-CoA thiolase (387 aa).

Residue Cys-91 is the Acyl-thioester intermediate of the active site. Catalysis depends on proton acceptor residues His-343 and Cys-373.

The protein belongs to the thiolase-like superfamily. Thiolase family. Heterotetramer of two alpha chains (FadB) and two beta chains (FadA).

It is found in the cytoplasm. The catalysed reaction is an acyl-CoA + acetyl-CoA = a 3-oxoacyl-CoA + CoA. It functions in the pathway lipid metabolism; fatty acid beta-oxidation. In terms of biological role, catalyzes the final step of fatty acid oxidation in which acetyl-CoA is released and the CoA ester of a fatty acid two carbons shorter is formed. The protein is 3-ketoacyl-CoA thiolase of Enterobacter sp. (strain 638).